Here is a 439-residue protein sequence, read N- to C-terminus: Ribosomal protein uS12 methylthiotransferase RimO (439 aa).

One can recognise an MTTase N-terminal domain in the interval 2–114 (SKLYLMSLGC…IDEMILKKTN (113 aa)). Cys-11, Cys-45, Cys-77, Cys-146, Cys-150, and Cys-153 together coordinate [4Fe-4S] cluster. Residues 132–363 (TGSNSHAFIK…VDEVIEKSFE (232 aa)) form the Radical SAM core domain.

Belongs to the methylthiotransferase family. RimO subfamily. The cofactor is [4Fe-4S] cluster.

Its subcellular location is the cytoplasm. The catalysed reaction is L-aspartate(89)-[ribosomal protein uS12]-hydrogen + (sulfur carrier)-SH + AH2 + 2 S-adenosyl-L-methionine = 3-methylsulfanyl-L-aspartate(89)-[ribosomal protein uS12]-hydrogen + (sulfur carrier)-H + 5'-deoxyadenosine + L-methionine + A + S-adenosyl-L-homocysteine + 2 H(+). Its function is as follows. Catalyzes the methylthiolation of an aspartic acid residue of ribosomal protein uS12. The protein is Ribosomal protein uS12 methylthiotransferase RimO of Campylobacter jejuni subsp. jejuni serotype O:23/36 (strain 81-176).